Here is a 158-residue protein sequence, read N- to C-terminus: Pycsar effector protein SaPycTM (158 aa).

Transmembrane regions (helical) follow at residues 20 to 40, 53 to 73, and 136 to 156; these read FADAKALAIISINGFILNFNF, IFNFTAFILLIITIILAAFAV, and VFIISALGYSCLLFSSIFQII.

Its subcellular location is the cell membrane. Functionally, pycsar (pyrimidine cyclase system for antiphage resistance) provides immunity against bacteriophage. The pyrimidine cyclase (PycC) synthesizes cyclic nucleotides in response to infection; these serve as specific second messenger signals. The signals activate the adjacent effector, leading to bacterial cell death and abortive phage infection. A clade E Pycsar system. The effector gene of a two-gene Pycsar system. Expression of this and adjacent SaPycC cytidylate cyclase (AC P0DV38) probably confers resistance to bacteriophage. The genes are probably only expressed in response to bacteriophage infection. Probably only responds to cCMP (produced by its cognate NTP cyclase), acts by impairing membrane integrity. The polypeptide is Pycsar effector protein SaPycTM (Staphylococcus aureus).